Here is a 359-residue protein sequence, read N- to C-terminus: MISKLSVNPTFSPSYNIIVDSVLDFSHILEYVTNKQVLVVTNTTVAKLYLTKFLPALVDDLDVRTCILEDGEQYKSQQSLDKILSTLLENHFTRNSTVLVALGGGVIGDITGFAAAIYQRGIDFIQIPTTLLSQVDSSVGGKTAINHQLGKNMIGAFYQPKVVYTSIEFYKTLPQREYIAGMAEVVKYAFISKDFYLWLDSNRDKILAKDSVTLIEMVKRSCQIKAQVVAMDEKELTGARAILNFGHTFGHAIEKCQNYRGLKHGEAVGVGMAQAIDFSHYLGLISQQQAKDFKDFIVSFGISIDFPNDICQKEFLEAMLLDKKNSNKELKFILIENIGSLSLQKQSKNELEQFLDISR.

NAD(+) contacts are provided by residues 70–75, 105–109, 129–130, Lys-142, Lys-151, and 169–172; these read DGEQYK, GVIGD, TT, and FYKT. The Zn(2+) site is built by Glu-184, His-247, and His-264.

The protein belongs to the sugar phosphate cyclases superfamily. Dehydroquinate synthase family. The cofactor is Co(2+). It depends on Zn(2+) as a cofactor. Requires NAD(+) as cofactor.

The protein resides in the cytoplasm. It catalyses the reaction 7-phospho-2-dehydro-3-deoxy-D-arabino-heptonate = 3-dehydroquinate + phosphate. Its pathway is metabolic intermediate biosynthesis; chorismate biosynthesis; chorismate from D-erythrose 4-phosphate and phosphoenolpyruvate: step 2/7. Its function is as follows. Catalyzes the conversion of 3-deoxy-D-arabino-heptulosonate 7-phosphate (DAHP) to dehydroquinate (DHQ). The sequence is that of 3-dehydroquinate synthase from Francisella tularensis subsp. mediasiatica (strain FSC147).